We begin with the raw amino-acid sequence, 348 residues long: Putative olfactory receptor 3A4 (348 aa).

Over 1–28 the chain is Extracellular; that stretch reads MDLGNSGNDSVVTKFVLLGLTETAALQP. An N-linked (GlcNAc...) asparagine glycan is attached at asparagine 8. A helical transmembrane segment spans residues 29–52; that stretch reads ILFVIFLLAYVTTIGGTLSILAAI. At 53–60 the chain is on the cytoplasmic side; it reads LMETKLHS. The chain crosses the membrane as a helical span at residues 61 to 82; it reads PMYFFLGNLSLPDVGCVSVTVP. Residues 83 to 103 lie on the Extracellular side of the membrane; the sequence is AMLSHFISNDRSIPYKACLSE. Cysteine 100 and cysteine 192 are joined by a disulfide. A helical membrane pass occupies residues 104–123; it reads LFFFHLLAGADCFLLTIMAY. Residues 124 to 143 lie on the Cytoplasmic side of the membrane; sequence DRYLAICQSLTYSSRMSWGI. Residues 144 to 161 form a helical membrane-spanning segment; sequence QQALVGMSCVFSFTNALT. Residues 162–199 lie on the Extracellular side of the membrane; that stretch reads QTVALSPLNFCGPNVINHFYCDLPQPFQLSCSSVHLNG. Residues 200-222 form a helical membrane-spanning segment; that stretch reads QLLFVAAAFMGVAPLVLITVSYA. The Cytoplasmic segment spans residues 223-239; it reads HVAAAVLRIRSAEGRKK. Residues 240-262 form a helical membrane-spanning segment; sequence AFSTCSSHLTVVGIFYGTGVFSY. Topologically, residues 263–275 are extracellular; sequence TRLGSVESSDKDK. A helical membrane pass occupies residues 276–295; sequence GIGILNTVISPMLNPLIYWT. The Cytoplasmic segment spans residues 296 to 348; it reads SLLDVGCISHCSSDAGVSPGPPVQSSLCCLQFTALLSPPPGWGGLSPLNSHGL.

The protein belongs to the G-protein coupled receptor 1 family.

The protein resides in the cell membrane. Odorant receptor. This is Putative olfactory receptor 3A4 (OR3A4P) from Homo sapiens (Human).